Here is a 646-residue protein sequence, read N- to C-terminus: Long-chain fatty acid transport protein 1 (646 aa).

Residues 1–13 are Extracellular-facing; the sequence is MRAPGAGAASVVS. Residues 14–34 form a helical membrane-spanning segment; that stretch reads LALLWLLGLPWTWSAAAALGV. The Cytoplasmic segment spans residues 35 to 646; the sequence is YVGSGGWRFL…TRICSGAFAL (612 aa). The segment at 191 to 475 is sufficient for oligomerization; that stretch reads EVSGHLGKSL…YVSESATSKK (285 aa). 246-257 contributes to the AMP binding site; that stretch reads YIYTSGTTGLPK.

The protein belongs to the ATP-dependent AMP-binding enzyme family. As to quaternary structure, self-associates. May function as a homodimer. Interacts with EPRS1; mediates the translocation of SLC27A1 from the cytoplasm to the plasma membrane thereby increasing the uptake of long-chain fatty acids. Interacts with DGAT2 and this interaction is enhanced in the presence of ZFYVE1. Highest levels of expression are detected in muscle and adipose tissue small, intermediate levels in small intestine, and barely detectable in liver. Expressed in brain gray matter.

Its subcellular location is the cell membrane. It localises to the endomembrane system. The protein resides in the cytoplasm. It carries out the reaction a fatty acid(in) = a fatty acid(out). It catalyses the reaction (9Z)-octadecenoate(out) = (9Z)-octadecenoate(in). The enzyme catalyses hexadecanoate(out) = hexadecanoate(in). The catalysed reaction is (9Z,12Z)-octadecadienoate(out) = (9Z,12Z)-octadecadienoate(in). It carries out the reaction (5Z,8Z,11Z,14Z)-eicosatetraenoate(out) = (5Z,8Z,11Z,14Z)-eicosatetraenoate(in). It catalyses the reaction a long-chain fatty acid + ATP + CoA = a long-chain fatty acyl-CoA + AMP + diphosphate. The enzyme catalyses (5Z,8Z,11Z,14Z)-eicosatetraenoate + ATP + CoA = (5Z,8Z,11Z,14Z)-eicosatetraenoyl-CoA + AMP + diphosphate. The catalysed reaction is a very long-chain fatty acid + ATP + CoA = a very long-chain fatty acyl-CoA + AMP + diphosphate. It carries out the reaction tetracosanoate + ATP + CoA = tetracosanoyl-CoA + AMP + diphosphate. With respect to regulation, inhibited by Triacsin C. In terms of biological role, mediates the import of long-chain fatty acids (LCFA) into the cell by facilitating their transport at the plasma membrane. Also functions as an acyl-CoA ligase catalyzing the ATP-dependent formation of fatty acyl-CoA using LCFA and very-long-chain fatty acids (VLCFA) as substrates, which prevents fatty acid efflux from cells and might drive more fatty acid uptake. May act directly as a bona fide transporter, or alternatively, in a cytoplasmic or membrane-associated multimeric protein complex to trap and draw fatty acids towards accumulation. Plays a pivotal role in regulating available LCFA substrates from exogenous sources in tissues undergoing high levels of beta-oxidation or triglyceride synthesis. May be involved in regulation of cholesterol metabolism. Probably involved in fatty acid transport across the blood barrier. This is Long-chain fatty acid transport protein 1 from Homo sapiens (Human).